Here is a 700-residue protein sequence, read N- to C-terminus: Ubiquitin carboxyl-terminal hydrolase BAP1 (700 aa).

One can recognise a UCH catalytic domain in the interval 4-235 (GWLELESDPG…IRFNLMAVVP (232 aa)). Residue Cys-91 is the Nucleophile of the active site. Residue His-169 is the Proton donor of the active site. Composition is skewed to low complexity over residues 273 to 282 (SQKSQESQSP) and 317 to 332 (SPPTKSKPVAKASASS). Disordered stretches follow at residues 273-346 (SQKS…PIVQ), 363-405 (QEEE…NTNS), and 469-513 (THSQ…SPVT). Over residues 386-399 (SDDEDDYDDDEEEE) the composition is skewed to acidic residues. A coiled-coil region spans residues 598–632 (SKEKELLALLKCVEAEIANYEACLKEEVEKRKKFK). The 29-residue stretch at 641–669 (NYDEFICTFISMLAQEGMLASLVEQNISV) folds into the ULD domain. Residues 674 to 700 (GVSIGRLHKQRKPDRRKRSRPYKAKRQ) are disordered. A Nuclear localization signal motif is present at residues 688-693 (RRKRSR).

The protein belongs to the peptidase C12 family. BAP1 subfamily. In terms of assembly, component of the PR-DUB complex.

The protein localises to the cytoplasm. The protein resides in the nucleus. It carries out the reaction Thiol-dependent hydrolysis of ester, thioester, amide, peptide and isopeptide bonds formed by the C-terminal Gly of ubiquitin (a 76-residue protein attached to proteins as an intracellular targeting signal).. In terms of biological role, deubiquitinating enzyme that plays a key role in chromatin by mediating deubiquitination of histone H2A. Catalytic component of the PR-DUB complex, a complex that specifically mediates deubiquitination of histone H2A monoubiquitinated at 'Lys-119' (H2AK119ub1). In Gallus gallus (Chicken), this protein is Ubiquitin carboxyl-terminal hydrolase BAP1 (BAP1).